The following is a 172-amino-acid chain: Small ribosomal subunit protein uS13c (172 aa).

The transit peptide at 1 to 47 directs the protein to the chloroplast; the sequence is MAHTLATPVAPSVSLICNTKLSVSLSSSSLAFRPVNPKNGGGLSIKC.

Component of the chloroplast small ribosomal subunit (SSU). Mature 70S chloroplast ribosomes of higher plants consist of a small (30S) and a large (50S) subunit. The 30S small subunit contains 1 molecule of ribosomal RNA (16S rRNA) and 24 different proteins. The 50S large subunit contains 3 rRNA molecules (23S, 5S and 4.5S rRNA) and 33 different proteins. uS13c interacts with translation factor pY (PSRP1).

It is found in the plastid. The protein localises to the chloroplast. Functionally, component of the chloroplast ribosome (chloro-ribosome), a dedicated translation machinery responsible for the synthesis of chloroplast genome-encoded proteins, including proteins of the transcription and translation machinery and components of the photosynthetic apparatus. The sequence is that of Small ribosomal subunit protein uS13c (RPS13) from Spinacia oleracea (Spinach).